We begin with the raw amino-acid sequence, 869 residues long: Leucine--tRNA ligase (869 aa).

The 'HIGH' region motif lies at 42–52 (PYPSGRLHMGH). Residues 620 to 624 (KMSKS) carry the 'KMSKS' region motif. An ATP-binding site is contributed by Lys623.

The protein belongs to the class-I aminoacyl-tRNA synthetase family.

It is found in the cytoplasm. It carries out the reaction tRNA(Leu) + L-leucine + ATP = L-leucyl-tRNA(Leu) + AMP + diphosphate. This Hamiltonella defensa subsp. Acyrthosiphon pisum (strain 5AT) protein is Leucine--tRNA ligase.